The chain runs to 128 residues: Sulfurtransferase TusD (128 aa).

Cys-78 serves as the catalytic Cysteine persulfide intermediate.

This sequence belongs to the DsrE/TusD family. In terms of assembly, heterohexamer, formed by a dimer of trimers. The hexameric TusBCD complex contains 2 copies each of TusB, TusC and TusD. The TusBCD complex interacts with TusE.

It localises to the cytoplasm. Part of a sulfur-relay system required for 2-thiolation of 5-methylaminomethyl-2-thiouridine (mnm(5)s(2)U) at tRNA wobble positions. Accepts sulfur from TusA and transfers it in turn to TusE. This Cronobacter sakazakii (strain ATCC BAA-894) (Enterobacter sakazakii) protein is Sulfurtransferase TusD.